The chain runs to 68 residues: Beta-defensin 1 (68 aa).

Positions 1–21 are cleaved as a signal peptide; that stretch reads MRTSYLLLFTLCLLLSEMASG. A propeptide spanning residues 22-32 is cleaved from the precursor; it reads DNFLTGLGHRS. Cystine bridges form between Cys-37–Cys-66, Cys-44–Cys-59, and Cys-49–Cys-67.

This sequence belongs to the beta-defensin family. Monomer. Homodimer.

The protein resides in the secreted. Its subcellular location is the membrane. Its function is as follows. Has bactericidal activity. May act as a ligand for C-C chemokine receptor CCR6. Positively regulates the sperm motility and bactericidal activity in a CCR6-dependent manner. Binds to CCR6 and triggers Ca2+ mobilization in the sperm which is important for its motility. The chain is Beta-defensin 1 (DEFB1) from Allochrocebus preussi (Preuss's monkey).